Here is a 459-residue protein sequence, read N- to C-terminus: Nuclear hormone receptor family member nhr-11 (459 aa).

The segment at residues 2 to 81 (GPLCAVCESP…AGMRSELVRS (80 aa)) is a DNA-binding region (nuclear receptor). 2 NR C4-type zinc fingers span residues 5-26 (CAVC…CKAC) and 42-69 (CAAD…LRKC). Disordered stretches follow at residues 90–119 (RRKD…EEMD) and 134–162 (DLPL…SSFD). The segment covering 97–115 (NSDAAPNSNSPSTRQSSSP) has biased composition (low complexity). An NR LBD domain is found at 188 to 458 (ENNSILQYYH…SMLHEMLNFQ (271 aa)).

This sequence belongs to the nuclear hormone receptor family.

It is found in the nucleus. Its function is as follows. Orphan nuclear receptor. The sequence is that of Nuclear hormone receptor family member nhr-11 (nhr-11) from Caenorhabditis elegans.